The sequence spans 258 residues: DNA-directed RNA polymerase subunit Rpo3 (258 aa).

Belongs to the archaeal Rpo3/eukaryotic RPB3 RNA polymerase subunit family. As to quaternary structure, part of the RNA polymerase complex.

It localises to the cytoplasm. The enzyme catalyses RNA(n) + a ribonucleoside 5'-triphosphate = RNA(n+1) + diphosphate. DNA-dependent RNA polymerase (RNAP) catalyzes the transcription of DNA into RNA using the four ribonucleoside triphosphates as substrates. The protein is DNA-directed RNA polymerase subunit Rpo3 of Pyrobaculum calidifontis (strain DSM 21063 / JCM 11548 / VA1).